The sequence spans 214 residues: Cdc42 effector protein 2 (214 aa).

At Ser-2 the chain carries N-acetylserine. Residues 30–44 enclose the CRIB domain; it reads ISPPLGDFRHTIHIG. Residues Ser-31, Ser-101, Ser-137, Ser-141, and Ser-145 each carry the phosphoserine modification. The interval 118–151 is disordered; the sequence is ALTLPTTQAPPKPPRLHLESPQPSPKSSPQEAGN.

Belongs to the BORG/CEP family. As to quaternary structure, interacts with CDC42 and RHOQ, in a GTP-dependent manner, and with SEPT7.

Its subcellular location is the endomembrane system. The protein resides in the cytoplasm. It localises to the cytoskeleton. Functionally, probably involved in the organization of the actin cytoskeleton. May act downstream of CDC42 to induce actin filament assembly leading to cell shape changes. Induces pseudopodia formation in fibroblasts in a CDC42-dependent manner. This Rattus norvegicus (Rat) protein is Cdc42 effector protein 2 (Cdc42ep2).